The sequence spans 509 residues: Maturase K (509 aa).

Belongs to the intron maturase 2 family. MatK subfamily.

The protein localises to the plastid. The protein resides in the chloroplast. Functionally, usually encoded in the trnK tRNA gene intron. Probably assists in splicing its own and other chloroplast group II introns. The sequence is that of Maturase K from Dalea purpurea (Violet prairie clover).